Here is a 393-residue protein sequence, read N- to C-terminus: MDVKRFKRVFLIVMDSVGIGEAPDAKAFGDQGAHTLGHIAERMNGLHMPNMAALGLSHIRPIQGIEKVDKPKAHYGIMQEISSGKDTMTGHWEIMGLHIREPFRVFPNGFPEELLNEIRELTGREILGNKVASGTEIIKELGDEHVKTGALIVYTSADSVLQIAAHEEVVPLEELYDICKKVRALTLDPKYMVGRIIARPFIGADGNWERTSNRHDYALKPFGRTVMNELKDAGFDSIAIGKISDIYDGEGVTESIRTISNDDGMEKLVRSMDQSFTGLSFINLVDFDAKYGHRRDPIGYGQALEQFDQQLADVVEKIGEEDVLIITADHGNDPVHHGTDHTREFVPLLVYTRGIKEGKDLGLRKTFADVGATIADNFQVEAPSIGTSFLHEL.

6 residues coordinate Mn(2+): Asp-15, Asp-288, His-293, Asp-329, His-330, and His-341.

Belongs to the phosphopentomutase family. Mn(2+) serves as cofactor.

Its subcellular location is the cytoplasm. The enzyme catalyses 2-deoxy-alpha-D-ribose 1-phosphate = 2-deoxy-D-ribose 5-phosphate. The catalysed reaction is alpha-D-ribose 1-phosphate = D-ribose 5-phosphate. It participates in carbohydrate degradation; 2-deoxy-D-ribose 1-phosphate degradation; D-glyceraldehyde 3-phosphate and acetaldehyde from 2-deoxy-alpha-D-ribose 1-phosphate: step 1/2. Functionally, isomerase that catalyzes the conversion of deoxy-ribose 1-phosphate (dRib-1-P) and ribose 1-phosphate (Rib-1-P) to deoxy-ribose 5-phosphate (dRib-5-P) and ribose 5-phosphate (Rib-5-P), respectively. The polypeptide is Phosphopentomutase (Halalkalibacterium halodurans (strain ATCC BAA-125 / DSM 18197 / FERM 7344 / JCM 9153 / C-125) (Bacillus halodurans)).